Reading from the N-terminus, the 139-residue chain is Invertebrate-type lysozyme 2 (139 aa).

Positions M1–A18 are cleaved as a signal peptide. Positions D19–C138 constitute an I-type lysozyme domain. Intrachain disulfides connect C20/C106, C23/C138, C25/C31, C36/C45, C58/C86, C76/C82, and C98/C120. Residue E28 is the Proton donor of the active site. D39 acts as the Nucleophile in catalysis. K51–D57 contributes to the substrate binding site. Substrate contacts are provided by residues Y90 and H113 to G115.

The protein belongs to the glycosyl hydrolase 22 family. Type-I lysozyme subfamily. Expressed in pharyngeal muscle cell pm3, nerve ring and intestine.

It catalyses the reaction Hydrolysis of (1-&gt;4)-beta-linkages between N-acetylmuramic acid and N-acetyl-D-glucosamine residues in a peptidoglycan and between N-acetyl-D-glucosamine residues in chitodextrins.. Has bacteriolytic activity against Gram-positive bacteria. May play a role in resistance to Gram-positive bacterium S.aureus infection. The chain is Invertebrate-type lysozyme 2 from Caenorhabditis elegans.